An 86-amino-acid polypeptide reads, in one-letter code: UPF0297 protein SAHV_1604 (86 aa).

The protein belongs to the UPF0297 family.

This chain is UPF0297 protein SAHV_1604, found in Staphylococcus aureus (strain Mu3 / ATCC 700698).